The chain runs to 417 residues: Putative nickel insertion protein (417 aa).

The disordered stretch occupies residues H69 to R99. A compositionally biased stretch (basic residues) spans D74–R99.

Belongs to the LarC family.

The polypeptide is Putative nickel insertion protein (Maridesulfovibrio salexigens (strain ATCC 14822 / DSM 2638 / NCIMB 8403 / VKM B-1763) (Desulfovibrio salexigens)).